Reading from the N-terminus, the 747-residue chain is Myotubularin-related protein 12 (747 aa).

The segment covering 1–14 has biased composition (gly residues); it reads MLGKGVVGGGGGTK. Residues 1–21 form a disordered region; sequence MLGKGVVGGGGGTKGPKPSFV. The Myotubularin phosphatase domain maps to 205–643; sequence FDTLKDWCWE…PEIKVWAQRY (439 aa). The segment at 449-558 is interaction with MTM1; that stretch reads VPVFLLFLDC…KGQRKGMRFK (110 aa). Phosphoserine is present on residues S564, S601, and S716.

Belongs to the protein-tyrosine phosphatase family. Non-receptor class myotubularin subfamily. As to quaternary structure, heterodimer with lipid phosphatase MTM1. Heterodimer with lipid phosphatase MTMR2.

Its subcellular location is the cytoplasm. It localises to the sarcoplasmic reticulum. The protein localises to the myofibril. The protein resides in the sarcomere. Functionally, acts as an adapter for the myotubularin-related phosphatases. Regulates phosphatase MTM1 protein stability and possibly its intracellular location. By stabilizing MTM1 protein levels, required for skeletal muscle maintenance but not for myogenesis. The sequence is that of Myotubularin-related protein 12 (MTMR12) from Pongo abelii (Sumatran orangutan).